We begin with the raw amino-acid sequence, 668 residues long: Probable metal-nicotianamine transporter YSL5 (668 aa).

Residues 1–11 (MPPPETSSAAA) show a composition bias toward low complexity. Residues 1-22 (MPPPETSSAAAPSPPSPDPLPP) are disordered. Residues 12-22 (PSPPSPDPLPP) are compositionally biased toward pro residues. A run of 14 helical transmembrane segments spans residues 27 to 47 (LTLR…VVIH), 51 to 71 (LTVG…FFLA), 102 to 122 (CAIA…IFAM), 147 to 167 (LGWM…SIVM), 209 to 229 (LVKY…FSGV), 268 to 288 (IVNC…WPFI), 315 to 335 (IAIS…FLII), 383 to 403 (LAVS…PIIF), 410 to 430 (LVLV…YGMG), 443 to 463 (IALF…AGLA), 501 to 521 (IGVA…WTAF), 557 to 577 (LEIC…KDVV), 595 to 615 (FYIG…LFAW), and 633 to 653 (GLIC…ILGV).

It belongs to the YSL (TC 2.A.67.2) family. Expressed in roots.

Its subcellular location is the membrane. Its function is as follows. May be involved in the transport of nicotianamine-chelated metals. This is Probable metal-nicotianamine transporter YSL5 (YSL5) from Oryza sativa subsp. japonica (Rice).